A 367-amino-acid chain; its full sequence is Deoxyhypusine synthase-like protein (367 aa).

A disordered region spans residues 1-23 (MKSLFQRRASKVRETEAMNAPVP).

It belongs to the deoxyhypusine synthase family.

The protein is Deoxyhypusine synthase-like protein of Caulobacter vibrioides (strain ATCC 19089 / CIP 103742 / CB 15) (Caulobacter crescentus).